The primary structure comprises 356 residues: Manganese-dependent ADP-ribose/CDP-alcohol diphosphatase (356 aa).

7 residues coordinate Zn(2+): D32, Q34, D81, N117, H253, H290, and H292.

Belongs to the ADPRibase-Mn family. As to quaternary structure, monomer. Requires Mg(2+) as cofactor.

The enzyme catalyses CDP-choline + H2O = phosphocholine + CMP + 2 H(+). The catalysed reaction is ADP-D-ribose + H2O = D-ribose 5-phosphate + AMP + 2 H(+). It carries out the reaction CDP-glycerol + H2O = sn-glycerol 3-phosphate + CMP + 2 H(+). Functionally, hydrolyzes ADP-ribose, IDP-ribose, CDP-glycerol, CDP-choline and CDP-ethanolamine, but not other non-reducing ADP-sugars or CDP-glucose. The polypeptide is Manganese-dependent ADP-ribose/CDP-alcohol diphosphatase (adprm) (Xenopus laevis (African clawed frog)).